We begin with the raw amino-acid sequence, 406 residues long: Leu/Ile/Val-binding protein homolog 5 (406 aa).

The first 29 residues, 1–29 (MIGTRLPAWTRVLACGVAGLSLMTISAKA), serve as a signal peptide directing secretion.

This sequence belongs to the leucine-binding protein family.

Its function is as follows. Component of an amino-acid transport system. In Brucella suis biovar 1 (strain 1330), this protein is Leu/Ile/Val-binding protein homolog 5.